We begin with the raw amino-acid sequence, 239 residues long: Ribonuclease PH (239 aa).

Residues R86 and 124 to 126 (GTR) each bind phosphate.

This sequence belongs to the RNase PH family. Homohexameric ring arranged as a trimer of dimers.

The catalysed reaction is tRNA(n+1) + phosphate = tRNA(n) + a ribonucleoside 5'-diphosphate. Phosphorolytic 3'-5' exoribonuclease that plays an important role in tRNA 3'-end maturation. Removes nucleotide residues following the 3'-CCA terminus of tRNAs; can also add nucleotides to the ends of RNA molecules by using nucleoside diphosphates as substrates, but this may not be physiologically important. Probably plays a role in initiation of 16S rRNA degradation (leading to ribosome degradation) during starvation. The sequence is that of Ribonuclease PH from Rhizobium leguminosarum bv. trifolii (strain WSM2304).